The sequence spans 439 residues: Tol-Pal system protein TolB (439 aa).

Positions 1-22 (MTKFPRWLAMLVGLLFPLSALT) are cleaved as a signal peptide.

This sequence belongs to the TolB family. As to quaternary structure, the Tol-Pal system is composed of five core proteins: the inner membrane proteins TolA, TolQ and TolR, the periplasmic protein TolB and the outer membrane protein Pal. They form a network linking the inner and outer membranes and the peptidoglycan layer.

The protein resides in the periplasm. Part of the Tol-Pal system, which plays a role in outer membrane invagination during cell division and is important for maintaining outer membrane integrity. This is Tol-Pal system protein TolB from Xylella fastidiosa (strain 9a5c).